A 568-amino-acid chain; its full sequence is K(+) efflux antiporter 5 (568 aa).

Positions 1 to 20 (MARFAVIGLTFLLLLGTSLS) are cleaved as a signal peptide. The disordered stretch occupies residues 59–78 (EFSENDSPEGSDGASFNSSV). 12 helical membrane-spanning segments follow: residues 154-174 (LISD…VFSC), 178-198 (PVIV…LKFI), 201-221 (MVQV…ALGL), 230-250 (VVGP…MFLC), 264-284 (GIFV…KFLV), 298-318 (IGIL…LPVL), 334-354 (LLLI…SFVP), 389-409 (LGLS…TTEF), 422-442 (NLFA…HFLW), 447-467 (ILLA…AVVV), 476-496 (ISFH…VLLS), and 510-530 (LLLL…FKLI).

It belongs to the monovalent cation:proton antiporter 2 (CPA2) transporter (TC 2.A.37) family. KEA (TC 2.A.37.1) subfamily. As to expression, expressed in roots, stems, leaves, flowers and silique.

It is found in the golgi apparatus membrane. The protein resides in the golgi apparatus. It localises to the trans-Golgi network membrane. Its subcellular location is the prevacuolar compartment membrane. The protein localises to the endomembrane system. The enzyme catalyses K(+)(in) + H(+)(out) = K(+)(out) + H(+)(in). Functionally, electroneutral K(+)/H(+) efflux antiporter involved in K(+) homeostasis and osmotic adjustment. Together with KEA4 and KEA6, promotes growth and development, and facilitates endosomal pH and ions homeostasis, as well as salt tolerance (e.g. K(+), NaCl and LiCl), probably by supporting cell wall biosynthesis during rapid etiolated seedling growth. This chain is K(+) efflux antiporter 5, found in Arabidopsis thaliana (Mouse-ear cress).